Consider the following 121-residue polypeptide: Small ribosomal subunit protein uS13 (121 aa).

A disordered region spans residues 92 to 121 (RRGLPVRGQNSKNNARTRKGPKRTVANKKK). The span at 106 to 121 (ARTRKGPKRTVANKKK) shows a compositional bias: basic residues.

The protein belongs to the universal ribosomal protein uS13 family. In terms of assembly, part of the 30S ribosomal subunit. Forms a loose heterodimer with protein S19. Forms two bridges to the 50S subunit in the 70S ribosome.

Its function is as follows. Located at the top of the head of the 30S subunit, it contacts several helices of the 16S rRNA. In the 70S ribosome it contacts the 23S rRNA (bridge B1a) and protein L5 of the 50S subunit (bridge B1b), connecting the 2 subunits; these bridges are implicated in subunit movement. Contacts the tRNAs in the A and P-sites. This chain is Small ribosomal subunit protein uS13, found in Shouchella clausii (strain KSM-K16) (Alkalihalobacillus clausii).